The chain runs to 486 residues: Ribosomal RNA small subunit methyltransferase F (486 aa).

S-adenosyl-L-methionine contacts are provided by residues 122 to 128 (ASAPGSK), Glu-146, Asp-173, and Asp-191. Cys-244 functions as the Nucleophile in the catalytic mechanism.

Belongs to the class I-like SAM-binding methyltransferase superfamily. RsmB/NOP family.

The protein localises to the cytoplasm. The enzyme catalyses cytidine(1407) in 16S rRNA + S-adenosyl-L-methionine = 5-methylcytidine(1407) in 16S rRNA + S-adenosyl-L-homocysteine + H(+). Specifically methylates the cytosine at position 1407 (m5C1407) of 16S rRNA. The sequence is that of Ribosomal RNA small subunit methyltransferase F from Shewanella loihica (strain ATCC BAA-1088 / PV-4).